We begin with the raw amino-acid sequence, 433 residues long: MAAAFSSTVGAPASTPTRSSFLGKKLNKPQVSAAVTYHGKSSSSNSRFKAMAAKEVDETKQTDEDRWKGLAYDISDDQQDITRGKGLVDNLFQAPMGDGTHVAVLSSYDYISQGQKSYNFDNMMDGFYIAKGFMDKLVVHLSKNFMTLPNIKVPLILGIWGGKGQGKSFQCELVFAKMGITPIMMSAGELESGNAGEPAKLIRQRYREASDLIKKGKMSCLFINDLDAGAGRMGGTTQYTVNNQMVNATLMNIADNPTNVQLPGMYNKEDNPRVPIIVTGNDFSTLYAPLIRDGRMEKFYWAPTREDRIGVCKGIFRTDGVDEEHVVQLVDTFPGQSIDFFGALRARVYDDEVRRWVSETGVENIARKLVNSKEGPPTFEQPKITIEKLLEYGHMLVAEQENVKRVQLADKYLNEAALGEANEDAMKTGSFFK.

Polar residues predominate over residues 1 to 20 (MAAAFSSTVGAPASTPTRSS). A chloroplast-targeting transit peptide spans 1–53 (MAAAFSSTVGAPASTPTRSSFLGKKLNKPQVSAAVTYHGKSSSSNSRFKAMAA). The tract at residues 1–60 (MAAAFSSTVGAPASTPTRSSFLGKKLNKPQVSAAVTYHGKSSSSNSRFKAMAAKEVDETK) is disordered. 161–168 (GGKGQGKS) contributes to the ATP binding site.

This sequence belongs to the RuBisCO activase family.

It is found in the plastid. The protein localises to the chloroplast stroma. Functionally, activation of RuBisCO (ribulose-1,5-bisphosphate carboxylase/oxygenase; EC 4.1.1.39) involves the ATP-dependent carboxylation of the epsilon-amino group of lysine leading to a carbamate structure. This is Ribulose bisphosphate carboxylase/oxygenase activase, chloroplastic (RCA1) from Zea mays (Maize).